A 466-amino-acid chain; its full sequence is MTIRVRFAPSPTGMLHIGGARTALFNYLFARHHGGQFLLRVEDTDRERSTPEATKVILDALDWLDLKPDEPPVYQSTRYARHREVAEQMLAAGQAYRCYCSREELAEMRAEAERSKKPFRYDGRWRDRDPAEAPAGVDPVIRLRAPREGETVIHDLVQGEVRVKNAELDDMILLRSDGTPTYLHAVVVDDHDMGITHVIRGDDHLTNTFRQAQIYDAMGWARPNFAHIPLIHGADGAKLSKRHGAVSVLQFRDEGYLPEALCNYLLRLGWGHGDAEILPREEQVALFDLDGVGRAASRMDYAKLLHVNAVFLRAAEDERLAADVVARLERDHGFPVSTEAAGRIAMLMPGLKDRARTLAELAESALFVVREAPLPMTEKAEALLTEAARDDLAALLLDFDKTDFSKAALHEAMKAYAEREEKKLGAIAQPLRAALTGSTVSPPIDAVMEALGPIEVRKRIFSVLGE.

Residues 9–19 carry the 'HIGH' region motif; the sequence is PSPTGMLHIGG. The short motif at 238 to 242 is the 'KMSKS' region element; sequence KLSKR. An ATP-binding site is contributed by Lys241.

This sequence belongs to the class-I aminoacyl-tRNA synthetase family. Glutamate--tRNA ligase type 1 subfamily. In terms of assembly, monomer.

The protein resides in the cytoplasm. It carries out the reaction tRNA(Glu) + L-glutamate + ATP = L-glutamyl-tRNA(Glu) + AMP + diphosphate. Catalyzes the attachment of glutamate to tRNA(Glu) in a two-step reaction: glutamate is first activated by ATP to form Glu-AMP and then transferred to the acceptor end of tRNA(Glu). The sequence is that of Glutamate--tRNA ligase 1 from Acidiphilium cryptum (strain JF-5).